The primary structure comprises 175 residues: tRNA (cytidine(56)-2'-O)-methyltransferase (175 aa).

Residue Leu-82 participates in S-adenosyl-L-methionine binding.

Belongs to the aTrm56 family. Homodimer.

The protein localises to the cytoplasm. It carries out the reaction cytidine(56) in tRNA + S-adenosyl-L-methionine = 2'-O-methylcytidine(56) in tRNA + S-adenosyl-L-homocysteine + H(+). Specifically catalyzes the AdoMet-dependent 2'-O-ribose methylation of cytidine at position 56 in tRNAs. The chain is tRNA (cytidine(56)-2'-O)-methyltransferase from Cenarchaeum symbiosum (strain A).